We begin with the raw amino-acid sequence, 263 residues long: Hydroxyacylglutathione hydrolase (263 aa).

Residues histidine 55, histidine 57, aspartate 59, histidine 60, histidine 117, aspartate 134, and histidine 172 each coordinate Zn(2+).

It belongs to the metallo-beta-lactamase superfamily. Glyoxalase II family. Monomer. It depends on Zn(2+) as a cofactor.

The catalysed reaction is an S-(2-hydroxyacyl)glutathione + H2O = a 2-hydroxy carboxylate + glutathione + H(+). Its pathway is secondary metabolite metabolism; methylglyoxal degradation; (R)-lactate from methylglyoxal: step 2/2. Thiolesterase that catalyzes the hydrolysis of S-D-lactoyl-glutathione to form glutathione and D-lactic acid. The sequence is that of Hydroxyacylglutathione hydrolase from Shewanella baltica (strain OS195).